The chain runs to 545 residues: Chaperonin GroEL (545 aa).

ATP-binding positions include 29–32 (TLGP), Lys50, 86–90 (DGTTT), Gly415, and Asp495.

This sequence belongs to the chaperonin (HSP60) family. As to quaternary structure, forms a cylinder of 14 subunits composed of two heptameric rings stacked back-to-back. Interacts with the co-chaperonin GroES.

Its subcellular location is the cytoplasm. The enzyme catalyses ATP + H2O + a folded polypeptide = ADP + phosphate + an unfolded polypeptide.. Its function is as follows. Together with its co-chaperonin GroES, plays an essential role in assisting protein folding. The GroEL-GroES system forms a nano-cage that allows encapsulation of the non-native substrate proteins and provides a physical environment optimized to promote and accelerate protein folding. The sequence is that of Chaperonin GroEL from Porphyromonas gingivalis (strain ATCC 33277 / DSM 20709 / CIP 103683 / JCM 12257 / NCTC 11834 / 2561).